We begin with the raw amino-acid sequence, 608 residues long: Dihydroxyacetone kinase (608 aa).

Residues 8–357 (YKKDLVLSHL…LDHKTSAPGW (350 aa)) enclose the DhaK domain. Substrate contacts are provided by residues 53 to 56 (GSGH), K105, and D110. Catalysis depends on H234, which acts as the Tele-hemiaminal-histidine intermediate. The DhaL domain occupies 392–599 (KLYADLLESG…LAALISGITD (208 aa)). ATP-binding positions include 421–424 (DGDC), 467–468 (TS), 523–524 (TL), and 584–586 (DPG).

The protein belongs to the dihydroxyacetone kinase (DAK) family.

The protein resides in the cytoplasm. The enzyme catalyses dihydroxyacetone + ATP = dihydroxyacetone phosphate + ADP + H(+). The catalysed reaction is D-glyceraldehyde + ATP = D-glyceraldehyde 3-phosphate + ADP + H(+). Its pathway is polyol metabolism; glycerol fermentation; glycerone phosphate from glycerol (oxidative route): step 2/2. Its function is as follows. Catalyzes both the phosphorylation of dihydroxyacetone and of glyceraldehyde. This chain is Dihydroxyacetone kinase (DAK), found in Komagataella pastoris (Yeast).